A 369-amino-acid polypeptide reads, in one-letter code: Anhydro-N-acetylmuramic acid kinase (369 aa).

12-19 (GTSMDGVD) lines the ATP pocket.

Belongs to the anhydro-N-acetylmuramic acid kinase family.

The enzyme catalyses 1,6-anhydro-N-acetyl-beta-muramate + ATP + H2O = N-acetyl-D-muramate 6-phosphate + ADP + H(+). Its pathway is amino-sugar metabolism; 1,6-anhydro-N-acetylmuramate degradation. It participates in cell wall biogenesis; peptidoglycan recycling. Functionally, catalyzes the specific phosphorylation of 1,6-anhydro-N-acetylmuramic acid (anhMurNAc) with the simultaneous cleavage of the 1,6-anhydro ring, generating MurNAc-6-P. Is required for the utilization of anhMurNAc either imported from the medium or derived from its own cell wall murein, and thus plays a role in cell wall recycling. The protein is Anhydro-N-acetylmuramic acid kinase of Shewanella baltica (strain OS185).